The chain runs to 125 residues: Glycine cleavage system H protein (125 aa).

One can recognise a Lipoyl-binding domain in the interval Val-19–Thr-101. Position 60 is an N6-lipoyllysine (Lys-60).

It belongs to the GcvH family. The glycine cleavage system is composed of four proteins: P, T, L and H. It depends on (R)-lipoate as a cofactor.

Functionally, the glycine cleavage system catalyzes the degradation of glycine. The H protein shuttles the methylamine group of glycine from the P protein to the T protein. The protein is Glycine cleavage system H protein of Paramagnetospirillum magneticum (strain ATCC 700264 / AMB-1) (Magnetospirillum magneticum).